The primary structure comprises 87 residues: HssA/B-like protein 56 (87 aa).

Belongs to the hssA/B family.

The polypeptide is HssA/B-like protein 56 (hssl56) (Dictyostelium discoideum (Social amoeba)).